The following is a 218-amino-acid chain: Small ribosomal subunit protein uS3c (218 aa).

A KH type-2 domain is found at 47 to 118; it reads VQNNIRISSG…KLNIAITRIS (72 aa).

It belongs to the universal ribosomal protein uS3 family. In terms of assembly, part of the 30S ribosomal subunit.

It is found in the plastid. It localises to the chloroplast. The protein is Small ribosomal subunit protein uS3c (rps3) of Draba nemorosa (Woodland whitlowgrass).